Consider the following 131-residue polypeptide: Translation initiation factor 5A (131 aa).

Hypusine is present on K37.

The protein belongs to the eIF-5A family.

The protein localises to the cytoplasm. Functionally, functions by promoting the formation of the first peptide bond. This Methanococcus maripaludis (strain C7 / ATCC BAA-1331) protein is Translation initiation factor 5A (eIF5A).